Here is a 206-residue protein sequence, read N- to C-terminus: Venom allergen 5 2 (206 aa).

4 disulfides stabilise this stretch: Cys-4–Cys-16, Cys-8–Cys-104, Cys-28–Cys-96, and Cys-172–Cys-189. Residues 48–191 enclose the SCP domain; it reads DEHNRFRQKV…MKSHYLVCNY (144 aa).

It belongs to the CRISP family. Venom allergen 5-like subfamily. As to expression, expressed by the venom gland.

The protein resides in the secreted. This Polybia paulista (Neotropical social wasp) protein is Venom allergen 5 2.